Reading from the N-terminus, the 419-residue chain is L-rhamnose isomerase (419 aa).

Mn(2+) is bound by residues His262, Asp294, and Asp296.

This sequence belongs to the rhamnose isomerase family. In terms of assembly, homotetramer. Requires Mn(2+) as cofactor.

It is found in the cytoplasm. It catalyses the reaction L-rhamnopyranose = L-rhamnulose. It participates in carbohydrate degradation; L-rhamnose degradation; glycerone phosphate from L-rhamnose: step 1/3. Functionally, catalyzes the interconversion of L-rhamnose and L-rhamnulose. This chain is L-rhamnose isomerase, found in Escherichia coli O157:H7.